Reading from the N-terminus, the 426-residue chain is MAVIISSKVLLIQLFVLVLGSFSKLSHGELWLELPLPFDWPPAEIPLPDIPSPFDGPTFVLPPPSPLPSPPPPSPSPPPPSPSPPPPSTIPLIPPFTGGFLPPLPGSKLPDFAGLLPLIPNLPDVPPIGGGPPVNQPKPSSPSPLVKPPPPPPSPCKPSPPDQSAKQPPQPPPAKQPSPPPPPPPVKAPSPSPAKQPPPPPPPVKAPSPSPATQPPTKQPPPPPRAKKSPLLPPPPPVAYPPVMTPSPSPAAEPPIIAPFPSPPANPPLIPRRPAPPVVKPLPPLGKPPIVSGLVYCKSCNSYGVPTLLNASLLQGAVVKLICYGKKTMVQWATTDNKGEFRIMPKSLTTADVGKCKVYLVKSPNPNCNVPTNFNGGKSGGLLKPLLPPKQPITPAVVPVQPPMSDLYGVGPFIFEASSKMPCDKN.

The signal sequence occupies residues 1–23 (MAVIISSKVLLIQLFVLVLGSFS). Disordered stretches follow at residues 56-109 (GPTF…GSKL) and 121-254 (NLPD…AAEP). Composition is skewed to pro residues over residues 60-94 (VLPP…PLIP), 123-161 (PDVP…PSPP), 168-224 (PPQP…PPPP), and 231-254 (LLPP…AAEP). A run of 3 repeats spans residues 69–73 (SPPPP), 76–80 (SPPPP), and 83–87 (SPPPP). Positions 69–182 (SPPPPSPSPP…PAKQPSPPPP (114 aa)) are 4 X 5 AA repeats of S-P(4). Residues 178 to 182 (SPPPP) form repeat 4. N-linked (GlcNAc...) asparagine glycosylation is present at Asn310.

As to expression, pistil (stigma and style tissue).

This Nicotiana tabacum (Common tobacco) protein is Pistil-specific extensin-like protein.